A 295-amino-acid chain; its full sequence is Mycothiol acetyltransferase (295 aa).

Residue Glu-30 coordinates 1D-myo-inositol 2-(L-cysteinylamino)-2-deoxy-alpha-D-glucopyranoside. 62–64 (LVV) is an acetyl-CoA binding site. One can recognise an N-acetyltransferase domain in the interval 137-295 (VTVRAFRADS…DDDTHVQYRR (159 aa)). Residues Glu-165, Lys-209, and Glu-227 each coordinate 1D-myo-inositol 2-(L-cysteinylamino)-2-deoxy-alpha-D-glucopyranoside. Residues 231 to 233 (VGI) and 238 to 244 (QGRGLGK) contribute to the acetyl-CoA site. Residue Tyr-265 coordinates 1D-myo-inositol 2-(L-cysteinylamino)-2-deoxy-alpha-D-glucopyranoside.

The protein belongs to the acetyltransferase family. MshD subfamily. In terms of assembly, monomer.

The catalysed reaction is 1D-myo-inositol 2-(L-cysteinylamino)-2-deoxy-alpha-D-glucopyranoside + acetyl-CoA = mycothiol + CoA + H(+). Functionally, catalyzes the transfer of acetyl from acetyl-CoA to desacetylmycothiol (Cys-GlcN-Ins) to form mycothiol. The protein is Mycothiol acetyltransferase of Nocardioides sp. (strain ATCC BAA-499 / JS614).